Here is a 547-residue protein sequence, read N- to C-terminus: Sodium-coupled neutral amino acid transporter 4 (547 aa).

Residues 1 to 30 (MDPMELRNVNIEPDDESSSGESAPDSYIGI) are disordered. Residues 1–104 (MDPMELRNVN…GLSYAMANTG (104 aa)) lie on the Extracellular side of the membrane. A Phosphoserine modification is found at Ser49. A helical membrane pass occupies residues 105-125 (IILFIIMLLAVAILSLYSVHL). Residues 126-151 (LLKTAKEGGSLIYEKLGEKAFGWPGK) are Cytoplasmic-facing. A helical transmembrane segment spans residues 152–172 (IGAFVSITMQNIGAMSSYLFI). The Extracellular portion of the chain corresponds to 173–195 (IKYELPEVIRAFMGLEENTGEWY). A helical membrane pass occupies residues 196-216 (LNGNYLIIFVSVGIILPLSLL). Residues 217 to 220 (KNLG) lie on the Cytoplasmic side of the membrane. The helical transmembrane segment at 221–241 (YLGYTSGFSLTCMVFFVSVVI) threads the bilayer. The Extracellular portion of the chain corresponds to 242–332 (YKKFQIPCPL…PKYFVFNSRT (91 aa)). Cys249 and Cys321 form a disulfide bridge. Asn260, Asn264, and Asn276 each carry an N-linked (GlcNAc...) asparagine glycan. A helical membrane pass occupies residues 333 to 353 (AYAIPILVFAFVCHPEVLPIY). The Cytoplasmic portion of the chain corresponds to 354-369 (SELKDRSRRKMQTVSN). The chain crosses the membrane as a helical span at residues 370–390 (ISITGMLVMYLLAALFGYLTF). At 391-411 (YGEVEDELLHAYSKVYTLDIP) the chain is on the extracellular side. The chain crosses the membrane as a helical span at residues 412-432 (LLMVRLAVLVAVTLTVPIVLF). Topologically, residues 433-453 (PIRTSVITLLFPKRPFSWIRH) are cytoplasmic. A helical transmembrane segment spans residues 454-474 (FLIAAVLIALNNVLVILVPTI). Residues 475-476 (KY) are Extracellular-facing. A helical transmembrane segment spans residues 477 to 497 (IFGFIGASSATMLIFILPAVF). The Cytoplasmic portion of the chain corresponds to 498–514 (YLKLVKKETFRSPQKVG). Residues 515 to 535 (ALIFLVVGIFFMIGSMALIII) form a helical membrane-spanning segment. The Extracellular portion of the chain corresponds to 536–547 (DWIYDPPNSKHH).

It belongs to the amino acid/polyamine transporter 2 family. Post-translationally, the disulfide bond plays an important role in substrate transport, but has no effect on trafficking to the cell surface. Expressed almost exclusively in embryonic and adult liver, and at lower levels in the kidney. Expressed at lower levels in adult muscle and pancreas. Detected in fetal blood vessels. Expressed in syncytiotrophoblas of placenta during first trimester and at term. Highly expressed in first trimester placenta compared to term placenta.

The protein localises to the cell membrane. It localises to the cell projection. Its subcellular location is the microvillus membrane. The enzyme catalyses L-methionine(in) + Na(+)(in) = L-methionine(out) + Na(+)(out). The catalysed reaction is L-asparagine(in) + Na(+)(in) = L-asparagine(out) + Na(+)(out). It catalyses the reaction L-threonine(in) + Na(+)(in) = L-threonine(out) + Na(+)(out). It carries out the reaction L-serine(in) + Na(+)(in) = L-serine(out) + Na(+)(out). The enzyme catalyses glycine(in) + Na(+)(in) = glycine(out) + Na(+)(out). The catalysed reaction is L-alanine(in) + Na(+)(in) = L-alanine(out) + Na(+)(out). It catalyses the reaction L-glutamine(in) + Na(+)(in) = L-glutamine(out) + Na(+)(out). It carries out the reaction L-histidine(in) + Na(+)(in) = L-histidine(out) + Na(+)(out). The enzyme catalyses L-cysteine(in) + Na(+)(in) = L-cysteine(out) + Na(+)(out). The catalysed reaction is L-proline(in) + Na(+)(in) = L-proline(out) + Na(+)(out). In terms of biological role, symporter that cotransports neutral amino acids and sodium ions from the extraccellular to the intracellular side of the cell membrane. The transport is electrogenic, pH dependent and partially tolerates substitution of Na(+) by Li(+). Preferentially transports smaller amino acids, such as glycine, L-alanine, L-serine, L-asparagine and L-threonine, followed by L-cysteine, L-histidine, L-proline and L-glutamine and L-methionine. The sequence is that of Sodium-coupled neutral amino acid transporter 4 from Homo sapiens (Human).